The chain runs to 291 residues: Gamma-sarcoglycan (291 aa).

Residues Met-1–Tyr-37 lie on the Cytoplasmic side of the membrane. A helical; Signal-anchor for type II membrane protein membrane pass occupies residues Leu-38–Leu-58. The Extracellular segment spans residues Lys-59 to Leu-291. The N-linked (GlcNAc...) asparagine glycan is linked to Asn-110. 2 disulfides stabilise this stretch: Cys-265–Cys-290 and Cys-267–Cys-283.

Belongs to the sarcoglycan beta/delta/gamma/zeta family. As to quaternary structure, interacts with the syntrophin SNTA1 and FLNC. Cross-link to form 2 major subcomplexes: one consisting of SGCB, SGCD and SGCG and the other consisting of SGCB and SGCD. The association between SGCB and SGCG is particularly strong while SGCA is loosely associated with the other sarcoglycans. In terms of tissue distribution, most strongly expressed in skeletal and heart muscle. Also detected in proliferating myoblasts.

It is found in the cell membrane. The protein resides in the sarcolemma. The protein localises to the cytoplasm. It localises to the cytoskeleton. Component of the sarcoglycan complex, a subcomplex of the dystrophin-glycoprotein complex which forms a link between the F-actin cytoskeleton and the extracellular matrix. In Mus musculus (Mouse), this protein is Gamma-sarcoglycan (Sgcg).